A 426-amino-acid chain; its full sequence is Glutamate-1-semialdehyde 2,1-aminomutase (426 aa).

Position 265 is an N6-(pyridoxal phosphate)lysine (lysine 265).

Belongs to the class-III pyridoxal-phosphate-dependent aminotransferase family. HemL subfamily. As to quaternary structure, homodimer. Pyridoxal 5'-phosphate is required as a cofactor.

It localises to the cytoplasm. The catalysed reaction is (S)-4-amino-5-oxopentanoate = 5-aminolevulinate. Its pathway is porphyrin-containing compound metabolism; protoporphyrin-IX biosynthesis; 5-aminolevulinate from L-glutamyl-tRNA(Glu): step 2/2. The polypeptide is Glutamate-1-semialdehyde 2,1-aminomutase (Escherichia coli O9:H4 (strain HS)).